Consider the following 201-residue polypeptide: Large ribosomal subunit protein bL25 (201 aa).

The interval 179–201 is disordered; that stretch reads VSITAPRVEAEKTEEEEPESTEE. The span at 190-201 shows a compositional bias: acidic residues; the sequence is KTEEEEPESTEE.

Belongs to the bacterial ribosomal protein bL25 family. CTC subfamily. Part of the 50S ribosomal subunit; part of the 5S rRNA/L5/L18/L25 subcomplex. Contacts the 5S rRNA. Binds to the 5S rRNA independently of L5 and L18.

Its function is as follows. This is one of the proteins that binds to the 5S RNA in the ribosome where it forms part of the central protuberance. The chain is Large ribosomal subunit protein bL25 from Prosthecochloris aestuarii (strain DSM 271 / SK 413).